The sequence spans 379 residues: Queuine tRNA-ribosyltransferase (379 aa).

The active-site Proton acceptor is Asp-94. Residues 94–98 (DSGGF), Asp-148, Gln-191, and Gly-218 contribute to the substrate site. The tract at residues 249–255 (GVGSPDS) is RNA binding. Asp-268 acts as the Nucleophile in catalysis. Positions 273-277 (TRIAR) are RNA binding; important for wobble base 34 recognition. Zn(2+) is bound by residues Cys-306, Cys-308, Cys-311, and His-337.

It belongs to the queuine tRNA-ribosyltransferase family. As to quaternary structure, homodimer. Within each dimer, one monomer is responsible for RNA recognition and catalysis, while the other monomer binds to the replacement base PreQ1. The cofactor is Zn(2+).

It catalyses the reaction 7-aminomethyl-7-carbaguanine + guanosine(34) in tRNA = 7-aminomethyl-7-carbaguanosine(34) in tRNA + guanine. Its pathway is tRNA modification; tRNA-queuosine biosynthesis. Catalyzes the base-exchange of a guanine (G) residue with the queuine precursor 7-aminomethyl-7-deazaguanine (PreQ1) at position 34 (anticodon wobble position) in tRNAs with GU(N) anticodons (tRNA-Asp, -Asn, -His and -Tyr). Catalysis occurs through a double-displacement mechanism. The nucleophile active site attacks the C1' of nucleotide 34 to detach the guanine base from the RNA, forming a covalent enzyme-RNA intermediate. The proton acceptor active site deprotonates the incoming PreQ1, allowing a nucleophilic attack on the C1' of the ribose to form the product. After dissociation, two additional enzymatic reactions on the tRNA convert PreQ1 to queuine (Q), resulting in the hypermodified nucleoside queuosine (7-(((4,5-cis-dihydroxy-2-cyclopenten-1-yl)amino)methyl)-7-deazaguanosine). The chain is Queuine tRNA-ribosyltransferase from Listeria welshimeri serovar 6b (strain ATCC 35897 / DSM 20650 / CCUG 15529 / CIP 8149 / NCTC 11857 / SLCC 5334 / V8).